The following is a 222-amino-acid chain: L-cystine transport system permease protein TcyL (222 aa).

Residues 1-22 (MQESIQLVIDSLPFLLKGAGYT) lie on the Periplasmic side of the membrane. Residues 19–207 (AGYTLQLSIG…IMATVLSTLQ (189 aa)) form the ABC transmembrane type-1 domain. The helical transmembrane segment at 23–43 (LQLSIGGMFFGLLLGFILALM) threads the bilayer. Over 44–64 (RLSPIWPVRWLARFYISIFRG) the chain is Cytoplasmic. The helical transmembrane segment at 65–85 (TPLIAQLFMIYYGLPQFGIEL) threads the bilayer. The Periplasmic portion of the chain corresponds to 86–182 (DPIPSAMIGL…RQAQLITSRT (97 aa)). The chain crosses the membrane as a helical span at residues 183-203 (LEVFTMYLAASLIYWIMATVL). The Cytoplasmic segment spans residues 204-222 (STLQNHFENQLNRQEREPK).

Belongs to the binding-protein-dependent transport system permease family. HisMQ subfamily. As to quaternary structure, the complex is composed of two ATP-binding proteins (TcyN), two transmembrane proteins (TcyL) and a solute-binding protein (TcyJ).

The protein localises to the cell inner membrane. Part of the ABC transporter complex TcyJLN involved in L-cystine import. Responsible for the translocation of the substrate across the membrane. The polypeptide is L-cystine transport system permease protein TcyL (Escherichia coli O6:H1 (strain CFT073 / ATCC 700928 / UPEC)).